Here is a 59-residue protein sequence, read N- to C-terminus: MAVPKKKTSKSKRDMRRATWNRKAAAQAQRALSLGKSILTGQAKGFYYPTDEEEEQEES.

Over residues 1–15 (MAVPKKKTSKSKRDM) the composition is skewed to basic residues. Positions 1 to 26 (MAVPKKKTSKSKRDMRRATWNRKAAA) are disordered.

The protein belongs to the bacterial ribosomal protein bL32 family.

The protein is Large ribosomal subunit protein bL32 of Cyanothece sp. (strain PCC 7425 / ATCC 29141).